Consider the following 193-residue polypeptide: Dense granule protein 2 (193 aa).

N-linked (GlcNAc...) asparagine glycosylation occurs at Asn-4. Residues Phe-14–Leu-34 traverse the membrane as a helical segment. Residue Asn-74 is glycosylated (N-linked (GlcNAc...) asparagine). Positions Ser-75–Ala-140 are disordered. The segment covering Glu-88–Thr-98 has biased composition (acidic residues). A helical transmembrane segment spans residues His-153 to Ser-173. The disordered stretch occupies residues Arg-174–Lys-193.

It belongs to the Gra6 family.

Its subcellular location is the membrane. This Neospora caninum (Coccidian parasite) protein is Dense granule protein 2 (DG2).